We begin with the raw amino-acid sequence, 161 residues long: Disulfide bond formation protein B (161 aa).

Residues 1 to 8 lie on the Cytoplasmic side of the membrane; that stretch reads MQANSRAY. A helical membrane pass occupies residues 9–25; it reads FLLIAFISFGLVGFALY. At 26 to 43 the chain is on the periplasmic side; the sequence is LQFEKGYQPCPLCIMQRF. The cysteines at positions 35 and 38 are disulfide-linked. The chain crosses the membrane as a helical span at residues 44–58; the sequence is AFIGIGLFSLLAVIA. Topologically, residues 59–63 are cytoplasmic; the sequence is QNTRS. A helical transmembrane segment spans residues 64-81; it reads LWQGLGMLSGVGGIAVAV. Residues 82-136 are Periplasmic-facing; sequence YHVSLLLNPKASCGIDPLENWVNALPTAKVLPQVFYSDGLCTAPLPPVLGLSVPA. Cys-94 and Cys-122 form a disulfide bridge. The chain crosses the membrane as a helical span at residues 137 to 155; sequence WSLIWLFILTLTLAVGLIR. Topologically, residues 156-161 are cytoplasmic; that stretch reads REKNFR.

It belongs to the DsbB family.

Its subcellular location is the cell inner membrane. Functionally, required for disulfide bond formation in some periplasmic proteins. Acts by oxidizing the DsbA protein. The chain is Disulfide bond formation protein B from Cupriavidus pinatubonensis (strain JMP 134 / LMG 1197) (Cupriavidus necator (strain JMP 134)).